The sequence spans 101 residues: Urease subunit beta (101 aa).

The protein belongs to the urease beta subunit family. In terms of assembly, heterotrimer of UreA (gamma), UreB (beta) and UreC (alpha) subunits. Three heterotrimers associate to form the active enzyme.

It localises to the cytoplasm. The catalysed reaction is urea + 2 H2O + H(+) = hydrogencarbonate + 2 NH4(+). It functions in the pathway nitrogen metabolism; urea degradation; CO(2) and NH(3) from urea (urease route): step 1/1. The protein is Urease subunit beta of Rhodopseudomonas palustris (strain ATCC BAA-98 / CGA009).